Here is a 633-residue protein sequence, read N- to C-terminus: Extracellular metalloproteinase 3 (633 aa).

Residues 1 to 18 (MHGLLLAGLLALPMNVLA) form the signal peptide. The propeptide occupies 19-246 (HPAEQHASNV…VHNVVDYVAS (228 aa)). N-linked (GlcNAc...) asparagine glycosylation is present at Asn410. His429 contributes to the Zn(2+) binding site. The active site involves Glu430. Residue His433 coordinates Zn(2+). 2 N-linked (GlcNAc...) asparagine glycosylation sites follow: Asn480 and Asn622.

Belongs to the peptidase M36 family. It depends on Zn(2+) as a cofactor.

It localises to the secreted. Secreted metalloproteinase probably acting as a virulence factor. This is Extracellular metalloproteinase 3 (MEP3) from Arthroderma benhamiae (Trichophyton mentagrophytes).